The chain runs to 327 residues: Phenylalanine--tRNA ligase alpha subunit (327 aa).

A Mg(2+)-binding site is contributed by glutamate 252.

It belongs to the class-II aminoacyl-tRNA synthetase family. Phe-tRNA synthetase alpha subunit type 1 subfamily. Tetramer of two alpha and two beta subunits. Requires Mg(2+) as cofactor.

Its subcellular location is the cytoplasm. It carries out the reaction tRNA(Phe) + L-phenylalanine + ATP = L-phenylalanyl-tRNA(Phe) + AMP + diphosphate + H(+). This chain is Phenylalanine--tRNA ligase alpha subunit, found in Aeromonas salmonicida (strain A449).